The primary structure comprises 200 residues: Tegument protein UL55 homolog (200 aa).

Residues 1–20 are compositionally biased toward basic and acidic residues; sequence MLPANRAEHSSDAEPRDIGS. Residues 1–23 form a disordered region; sequence MLPANRAEHSSDAEPRDIGSHGR.

It belongs to the alphaherpesvirinae HHV-1 UL55 family.

The protein resides in the virion tegument. It is found in the host nucleus matrix. This is Tegument protein UL55 homolog from Equine herpesvirus 1 (strain Ab4p) (EHV-1).